The primary structure comprises 79 residues: Conotoxin VnMSGL-0122 (79 aa).

The signal sequence occupies residues 1-20 (MSGLGIMVLALLLLVFMATS). A propeptide spanning residues 21 to 44 (HQDGGGKQATQRDAINVRRRRSIT) is cleaved from the precursor. Cystine bridges form between Cys52–Cys64, Cys56–Cys73, and Cys63–Cys77. Leu78 bears the Leucine amide mark.

This sequence belongs to the conotoxin O3 superfamily. As to expression, expressed by the venom duct.

The protein resides in the secreted. In Conus ventricosus (Mediterranean cone), this protein is Conotoxin VnMSGL-0122.